We begin with the raw amino-acid sequence, 644 residues long: Exoribonuclease 2 (644 aa).

Residues 189–516 (REDLTALNFV…NHRLLKAIIT (328 aa)) enclose the RNB domain. One can recognise an S1 motif domain in the interval 561–643 (DTRFPAEIID…ETRNVVARPV (83 aa)).

This sequence belongs to the RNR ribonuclease family. RNase II subfamily.

The protein resides in the cytoplasm. The catalysed reaction is Exonucleolytic cleavage in the 3'- to 5'-direction to yield nucleoside 5'-phosphates.. Functionally, involved in mRNA degradation. Hydrolyzes single-stranded polyribonucleotides processively in the 3' to 5' direction. The protein is Exoribonuclease 2 of Yersinia enterocolitica serotype O:8 / biotype 1B (strain NCTC 13174 / 8081).